We begin with the raw amino-acid sequence, 236 residues long: Probable transmembrane ascorbate ferrireductase 4 (236 aa).

Positions 14-210 (FARLSGLVVA…LGCIVITAAI (197 aa)) constitute a Cytochrome b561 domain. 3 helical membrane passes run 17 to 37 (LSGLVVAVSVLYWALFLPNLG), 42 to 62 (TLHPLLMVIGFILVSGEAILI), and 76 to 96 (VHLWLQGMALASAVFGIWTKF). 3 residues coordinate heme b: histidine 44, histidine 77, and histidine 110. 3 helical membrane-spanning segments follow: residues 112-132 (WMGLLSVSLFAAQWVTGFMSF), 144-164 (TFLPWHVFLGLYTYGLAIATA), and 191-211 (VNGLGLGLALLGCIVITAAIL). Histidine 149 is a binding site for heme b.

As to quaternary structure, homodimer. Requires heme b as cofactor.

Its subcellular location is the membrane. It catalyses the reaction Fe(3+)(out) + L-ascorbate(in) = monodehydro-L-ascorbate radical(in) + Fe(2+)(out) + H(+). Two-heme-containing cytochrome. May catalyze ascorbate-dependent trans-membrane ferric-chelate reduction. The protein is Probable transmembrane ascorbate ferrireductase 4 (CYB561D) of Arabidopsis thaliana (Mouse-ear cress).